The chain runs to 108 residues: UPF0145 protein LJ_1287 (108 aa).

Belongs to the UPF0145 family.

In Lactobacillus johnsonii (strain CNCM I-12250 / La1 / NCC 533), this protein is UPF0145 protein LJ_1287.